A 420-amino-acid polypeptide reads, in one-letter code: LanC-like protein 3 homolog (420 aa).

The protein belongs to the LanC-like protein family.

This Drosophila pseudoobscura pseudoobscura (Fruit fly) protein is LanC-like protein 3 homolog.